A 505-amino-acid chain; its full sequence is 2,3-bisphosphoglycerate-independent phosphoglycerate mutase (505 aa).

Mn(2+)-binding residues include Asp11 and Ser61. Ser61 functions as the Phosphoserine intermediate in the catalytic mechanism. Substrate is bound by residues His122, 152 to 153, Arg183, Arg189, 259 to 262, and Lys332; these read RD and RTDR. Mn(2+)-binding residues include Asp399, His403, Asp440, His441, and His458.

This sequence belongs to the BPG-independent phosphoglycerate mutase family. In terms of assembly, monomer. It depends on Mn(2+) as a cofactor.

It carries out the reaction (2R)-2-phosphoglycerate = (2R)-3-phosphoglycerate. The protein operates within carbohydrate degradation; glycolysis; pyruvate from D-glyceraldehyde 3-phosphate: step 3/5. Functionally, catalyzes the interconversion of 2-phosphoglycerate and 3-phosphoglycerate. The sequence is that of 2,3-bisphosphoglycerate-independent phosphoglycerate mutase from Flavobacterium johnsoniae (strain ATCC 17061 / DSM 2064 / JCM 8514 / BCRC 14874 / CCUG 350202 / NBRC 14942 / NCIMB 11054 / UW101) (Cytophaga johnsonae).